The following is a 569-amino-acid chain: 4-coumarate-CoA ligase 2 (569 aa).

Residues 1–24 (MITIAESHPQIHHSPPDTTAPSTP) form a disordered region. ATP-binding positions include 216–220 (SSGTT), His265, 337–339 (AAP), 359–360 (QG), Thr364, Asp448, Arg463, and Lys554. The tract at residues 290-359 (EMEGMLETIQ…GRLPQAVLGQ (70 aa)) is SBD1. The segment at 360–427 (GYGMTEAGPV…VRGPQIMKGY (68 aa)) is SBD2.

The protein belongs to the ATP-dependent AMP-binding enzyme family. In terms of tissue distribution, mostly expressed in stems, and, to a lower extent, in bulbs.

It carries out the reaction (E)-4-coumarate + ATP + CoA = (E)-4-coumaroyl-CoA + AMP + diphosphate. The protein operates within phytoalexin biosynthesis; 3,4',5-trihydroxystilbene biosynthesis; 3,4',5-trihydroxystilbene from trans-4-coumarate: step 1/2. Its function is as follows. Produces CoA thioesters of a variety of hydroxy- and methoxy-substituted cinnamic acids, which are used to synthesize several phenylpropanoid-derived compounds, including anthocyanins, flavonoids, isoflavonoids, coumarins, lignin, suberin and wall-bound phenolics. This is 4-coumarate-CoA ligase 2 from Narcissus pseudonarcissus (Daffodil).